The chain runs to 77 residues: ATP synthase subunit c (77 aa).

2 helical membrane-spanning segments follow: residues 13–33 (IATV…GIVA) and 55–75 (FLGI…YFIF).

It belongs to the ATPase C chain family. F-type ATPases have 2 components, F(1) - the catalytic core - and F(0) - the membrane proton channel. F(1) has five subunits: alpha(3), beta(3), gamma(1), delta(1), epsilon(1). F(0) has three main subunits: a(1), b(2) and c(10-14). The alpha and beta chains form an alternating ring which encloses part of the gamma chain. F(1) is attached to F(0) by a central stalk formed by the gamma and epsilon chains, while a peripheral stalk is formed by the delta and b chains.

It localises to the cell membrane. F(1)F(0) ATP synthase produces ATP from ADP in the presence of a proton or sodium gradient. F-type ATPases consist of two structural domains, F(1) containing the extramembraneous catalytic core and F(0) containing the membrane proton channel, linked together by a central stalk and a peripheral stalk. During catalysis, ATP synthesis in the catalytic domain of F(1) is coupled via a rotary mechanism of the central stalk subunits to proton translocation. Its function is as follows. Key component of the F(0) channel; it plays a direct role in translocation across the membrane. A homomeric c-ring of between 10-14 subunits forms the central stalk rotor element with the F(1) delta and epsilon subunits. The polypeptide is ATP synthase subunit c (Clavibacter sepedonicus (Clavibacter michiganensis subsp. sepedonicus)).